We begin with the raw amino-acid sequence, 944 residues long: Tyrosine-protein kinase transmembrane receptor ROR2 (944 aa).

The first 33 residues, 1–33, serve as a signal peptide directing secretion; that stretch reads MARGWVRPSRVPLCARAVWTAAALLLWTPWTAG. Residues 34 to 403 lie on the Extracellular side of the membrane; it reads EVEDSEAIDT…CSPRDGSKMG (370 aa). Residues 55–145 form the Ig-like C2-type domain; that stretch reads PTLKGYFLNF…VATNGLKTIT (91 aa). A glycan (N-linked (GlcNAc...) asparagine) is linked at N70. 9 cysteine pairs are disulfide-bonded: C83/C135, C174/C239, C182/C232, C223/C264, C252/C300, C256/C286, C316/C394, C337/C377, and C365/C389. Positions 169-303 constitute an FZ domain; sequence QEDGFCQPYR…SPDAANCMRI (135 aa). An N-linked (GlcNAc...) asparagine glycan is attached at N188. Residues 316–394 enclose the Kringle domain; that stretch reads CYNGSGADYR…RVELCDVPPC (79 aa). N-linked (GlcNAc...) asparagine glycosylation is present at N318. The chain crosses the membrane as a helical span at residues 404–424; the sequence is ILYILVPSIAIPLVIACLFFL. Over 425-944 the chain is Cytoplasmic; the sequence is VCMCRNKQKA…TEAAHVQLEA (520 aa). In terms of domain architecture, Protein kinase spans 473–746; the sequence is VRFMEELGED…PRFKDIHSRL (274 aa). ATP contacts are provided by residues 479–487 and K507; that span reads LGEDRFGKV. The active-site Proton acceptor is D615. Y646 bears the Phosphotyrosine; by autocatalysis mark. Positions 757 to 779 are disordered; that stretch reads SSAQTSGASNTTQTSSLSTSPVS. Residues 765 to 779 are compositionally biased toward low complexity; that stretch reads SNTTQTSSLSTSPVS. The residue at position 785 (R785) is an Asymmetric dimethylarginine. Disordered regions lie at residues 850-879 and 898-929; these read QVPP…TAPS and QNIA…LGDN. Low complexity predominate over residues 857–872; that stretch reads PKPSSHHSGSGSTSTG.

This sequence belongs to the protein kinase superfamily. Tyr protein kinase family. ROR subfamily. Homodimer; promotes osteogenesis. Binds YWHAB. Interacts with WTIP. Interacts with ROR2. The cofactor is Mg(2+).

It localises to the cell membrane. The enzyme catalyses L-tyrosyl-[protein] + ATP = O-phospho-L-tyrosyl-[protein] + ADP + H(+). Its function is as follows. Tyrosine-protein kinase receptor which may be involved in the early formation of the chondrocytes. It seems to be required for cartilage and growth plate development. Phosphorylates YWHAB, leading to induction of osteogenesis and bone formation. In contrast, has also been shown to have very little tyrosine kinase activity in vitro. May act as a receptor for wnt ligand WNT5A which may result in the inhibition of WNT3A-mediated signaling. This Mus musculus (Mouse) protein is Tyrosine-protein kinase transmembrane receptor ROR2 (Ror2).